A 656-amino-acid polypeptide reads, in one-letter code: UvrABC system protein B (656 aa).

Residues 23–180 (EGIKKGYRFQ…QHLAKIGYER (158 aa)) form the Helicase ATP-binding domain. Position 36 to 43 (36 to 43 (GVTGSGKT)) interacts with ATP. Positions 89-112 (YYDYYQPEAYVPTKDLYIEKNADI) match the Beta-hairpin motif. One can recognise a Helicase C-terminal domain in the interval 426 to 588 (QVDDLISEIK…ITPKTIVKPL (163 aa)). The 36-residue stretch at 614-649 (EEYLSLLEEEMYRAASELRYEDAAKLRDEIFRLREE) folds into the UVR domain.

It belongs to the UvrB family. As to quaternary structure, forms a heterotetramer with UvrA during the search for lesions. Interacts with UvrC in an incision complex.

It is found in the cytoplasm. Its function is as follows. The UvrABC repair system catalyzes the recognition and processing of DNA lesions. A damage recognition complex composed of 2 UvrA and 2 UvrB subunits scans DNA for abnormalities. Upon binding of the UvrA(2)B(2) complex to a putative damaged site, the DNA wraps around one UvrB monomer. DNA wrap is dependent on ATP binding by UvrB and probably causes local melting of the DNA helix, facilitating insertion of UvrB beta-hairpin between the DNA strands. Then UvrB probes one DNA strand for the presence of a lesion. If a lesion is found the UvrA subunits dissociate and the UvrB-DNA preincision complex is formed. This complex is subsequently bound by UvrC and the second UvrB is released. If no lesion is found, the DNA wraps around the other UvrB subunit that will check the other stand for damage. The sequence is that of UvrABC system protein B from Pseudothermotoga lettingae (strain ATCC BAA-301 / DSM 14385 / NBRC 107922 / TMO) (Thermotoga lettingae).